Here is a 360-residue protein sequence, read N- to C-terminus: Phenylalanine--tRNA ligase alpha subunit (360 aa).

Residue E260 coordinates Mg(2+).

Belongs to the class-II aminoacyl-tRNA synthetase family. Phe-tRNA synthetase alpha subunit type 1 subfamily. As to quaternary structure, tetramer of two alpha and two beta subunits. Mg(2+) is required as a cofactor.

The protein resides in the cytoplasm. It carries out the reaction tRNA(Phe) + L-phenylalanine + ATP = L-phenylalanyl-tRNA(Phe) + AMP + diphosphate + H(+). The sequence is that of Phenylalanine--tRNA ligase alpha subunit from Methylobacterium nodulans (strain LMG 21967 / CNCM I-2342 / ORS 2060).